The sequence spans 975 residues: Monofunctional C1-tetrahydrofolate synthase, mitochondrial (975 aa).

The N-terminal 30 residues, 1-30, are a transit peptide targeting the mitochondrion; sequence MSARLPFVLRRLARPQHPGSPRRLPSLCRA. The segment at 13-45 is disordered; sequence ARPQHPGSPRRLPSLCRASSGRGSGCGGGEGLL. Residues 31–345 form a methylenetetrahydrofolate dehydrogenase and cyclohydrolase region; sequence SSGRGSGCGG…REQQHRRWRL (315 aa). Residues 34-44 are compositionally biased toward gly residues; sequence RGSGCGGGEGL. Lysine 187 carries the N6-acetyllysine; alternate modification. Lysine 187 is modified (N6-succinyllysine; alternate). The interval 346 to 975 is formyltetrahydrofolate synthetase; the sequence is HCLKLQPLSP…TETEQVKGLF (630 aa). Serine 354 is subject to Phosphoserine. Position 420 to 427 (420 to 427) interacts with ATP; it reads TPLGEGKS. At lysine 593 the chain carries N6-succinyllysine.

In the N-terminal section; belongs to the tetrahydrofolate dehydrogenase/cyclohydrolase family. The protein in the C-terminal section; belongs to the formate--tetrahydrofolate ligase family. As to quaternary structure, homodimer.

It localises to the mitochondrion. The enzyme catalyses (6S)-5,6,7,8-tetrahydrofolate + formate + ATP = (6R)-10-formyltetrahydrofolate + ADP + phosphate. It functions in the pathway one-carbon metabolism; tetrahydrofolate interconversion. Its function is as follows. May provide the missing metabolic reaction required to link the mitochondria and the cytoplasm in the mammalian model of one-carbon folate metabolism complementing thus the enzymatic activities of MTHFD2. The sequence is that of Monofunctional C1-tetrahydrofolate synthase, mitochondrial (MTHFD1L) from Bos taurus (Bovine).